We begin with the raw amino-acid sequence, 414 residues long: Arrestin domain-containing protein 3 (414 aa).

Short sequence motifs (PPxY motif) lie at residues 346-349 and 391-394; these read PPSY and PPLY. The interval 393–414 is disordered; it reads LYSEIDPNPDQSSEDRPSCPSR. Residues 405 to 414 show a composition bias toward basic and acidic residues; that stretch reads SEDRPSCPSR.

The protein belongs to the arrestin family. As to quaternary structure, interacts (via PPxY motifs) with NEDD4 (via WW domains). Interacts with ADRB2. Interacts with ADRB3. Interacts with HGS (via PPxY motifs). Does not bind TXN (thioredoxin). Interacts with ITCH. In terms of tissue distribution, detected in visceral fat, subcutaneous fat, brown fat and skeletal muscle, and at lower levels in kidney.

It is found in the cytoplasm. The protein localises to the cell membrane. It localises to the lysosome. Its subcellular location is the endosome. The protein resides in the early endosome. Adapter protein that plays a role in regulating cell-surface expression of adrenergic receptors and probably also other G protein-coupled receptors. Plays a role in NEDD4-mediated ubiquitination and endocytosis af activated ADRB2 and subsequent ADRB2 degradation. May recruit NEDD4 to ADRB2. Alternatively, may function as adapter protein that does not play a major role in recruiting NEDD4 to ADRB2, but rather plays a role in a targeting ADRB2 to endosomes. This Mus musculus (Mouse) protein is Arrestin domain-containing protein 3 (Arrdc3).